The following is a 425-amino-acid chain: Adenylyltransferase and sulfurtransferase MOCS3 (425 aa).

ATP is bound by residues glycine 47, aspartate 68, 75–79 (SNLHR), lysine 92, and 136–137 (DN). The Zn(2+) site is built by cysteine 177 and cysteine 180. Cysteine 194 (glycyl thioester intermediate; for adenylyltransferase activity) is an active-site residue. Residues cysteine 253 and cysteine 256 each contribute to the Zn(2+) site. A Rhodanese domain is found at 305-423 (NNNNHLLIDV…WNESIDDSFP (119 aa)). Catalysis depends on cysteine 378, which acts as the Cysteine persulfide intermediate; for sulfurtransferase activity.

The protein in the N-terminal section; belongs to the HesA/MoeB/ThiF family. UBA4 subfamily. Requires Zn(2+) as cofactor.

It is found in the cytoplasm. Its subcellular location is the cytosol. The enzyme catalyses [molybdopterin-synthase sulfur-carrier protein]-C-terminal Gly-Gly + ATP + H(+) = [molybdopterin-synthase sulfur-carrier protein]-C-terminal Gly-Gly-AMP + diphosphate. It carries out the reaction [molybdopterin-synthase sulfur-carrier protein]-C-terminal Gly-Gly-AMP + S-sulfanyl-L-cysteinyl-[cysteine desulfurase] + AH2 = [molybdopterin-synthase sulfur-carrier protein]-C-terminal-Gly-aminoethanethioate + L-cysteinyl-[cysteine desulfurase] + A + AMP + 2 H(+). Its pathway is tRNA modification; 5-methoxycarbonylmethyl-2-thiouridine-tRNA biosynthesis. It functions in the pathway cofactor biosynthesis; molybdopterin biosynthesis. Its function is as follows. Plays a central role in 2-thiolation of mcm(5)S(2)U at tRNA wobble positions of cytosolic tRNA(Lys), tRNA(Glu) and tRNA(Gln). Also essential during biosynthesis of the molybdenum cofactor. Acts by mediating the C-terminal thiocarboxylation of sulfur carriers urm1 and mocs2a. Its N-terminus first activates urm1 and mocs2a as acyl-adenylates (-COAMP), then the persulfide sulfur on the catalytic cysteine is transferred to urm1 and mocs2a to form thiocarboxylation (-COSH) of their C-terminus. The reaction probably involves hydrogen sulfide that is generated from the persulfide intermediate and that acts as a nucleophile towards urm1 and mocs2a. Subsequently, a transient disulfide bond is formed. Does not use thiosulfate as sulfur donor; nfs1 probably acting as a sulfur donor for thiocarboxylation reactions. This Dictyostelium discoideum (Social amoeba) protein is Adenylyltransferase and sulfurtransferase MOCS3 (mocs3).